Here is a 111-residue protein sequence, read N- to C-terminus: MASNKQTKLHVRTGDNVIVISGDDKRKSGKVLSVDKENQKAIVEGINIVTKHNKPTANVPNGGIVKKEAPIHISKLMIADPKTGKATRIGRKEDKNGKMVRYAKQSGEVIK.

This sequence belongs to the universal ribosomal protein uL24 family. As to quaternary structure, part of the 50S ribosomal subunit.

In terms of biological role, one of two assembly initiator proteins, it binds directly to the 5'-end of the 23S rRNA, where it nucleates assembly of the 50S subunit. Its function is as follows. One of the proteins that surrounds the polypeptide exit tunnel on the outside of the subunit. The chain is Large ribosomal subunit protein uL24 from Cytophaga hutchinsonii (strain ATCC 33406 / DSM 1761 / CIP 103989 / NBRC 15051 / NCIMB 9469 / D465).